We begin with the raw amino-acid sequence, 303 residues long: Glutathione transport system permease protein GsiD (303 aa).

6 helical membrane passes run Ala-40 to Ile-60, Leu-105 to Leu-125, Leu-144 to Ile-164, Ala-165 to Gly-185, Ile-222 to Phe-242, and Val-266 to Phe-286. Residues Ala-101–Gly-290 enclose the ABC transmembrane type-1 domain.

This sequence belongs to the binding-protein-dependent transport system permease family. In terms of assembly, the complex is composed of two ATP-binding proteins (GsiA), two transmembrane proteins (GsiC and GsiD) and a solute-binding protein (GsiB).

The protein resides in the cell inner membrane. Its function is as follows. Part of the ABC transporter complex GsiABCD involved in glutathione import. Probably responsible for the translocation of the substrate across the membrane. This Shigella flexneri serotype 5b (strain 8401) protein is Glutathione transport system permease protein GsiD.